The following is a 513-amino-acid chain: 2-isopropylmalate synthase (513 aa).

Positions 5–268 (LIIFDTTLRD…DIGVDTTQIV (264 aa)) constitute a Pyruvate carboxyltransferase domain. Mn(2+)-binding residues include Asp14, His202, His204, and Asn239. The interval 394 to 513 (RFISLSQRSE…KAVQKINPQI (120 aa)) is regulatory domain.

The protein belongs to the alpha-IPM synthase/homocitrate synthase family. LeuA type 1 subfamily. Homodimer. Mn(2+) serves as cofactor.

The protein resides in the cytoplasm. The enzyme catalyses 3-methyl-2-oxobutanoate + acetyl-CoA + H2O = (2S)-2-isopropylmalate + CoA + H(+). Its pathway is amino-acid biosynthesis; L-leucine biosynthesis; L-leucine from 3-methyl-2-oxobutanoate: step 1/4. Its function is as follows. Catalyzes the condensation of the acetyl group of acetyl-CoA with 3-methyl-2-oxobutanoate (2-ketoisovalerate) to form 3-carboxy-3-hydroxy-4-methylpentanoate (2-isopropylmalate). The polypeptide is 2-isopropylmalate synthase (Cupriavidus necator (strain ATCC 17699 / DSM 428 / KCTC 22496 / NCIMB 10442 / H16 / Stanier 337) (Ralstonia eutropha)).